A 236-amino-acid polypeptide reads, in one-letter code: NLP effector protein 3 (236 aa).

The N-terminal stretch at 1–19 (MNLLGFLAVVALSTASVQA) is a signal peptide. A Conserved undecapeptide motif I motif is present at residues 103-113 (AIMYSWYFPKD). A Hepta-peptide GHRHDWE motif II motif is present at residues 120–126 (GHRHDWE).

Belongs to the Necrosis inducing protein (NPP1) family.

Its subcellular location is the secreted. Functionally, secreted effector that contributes to virulence during infection by P.capsici. Induces distinct chlorosis at 3 days after inoculation of host C.annuum leaves, and all the chlorotic areas gradually turn brown and become moderately necrotic at 7 days after inoculation. Leads only to chlorotic areas, without necrosis at 7 days after non-host N.benthamiana leaves infection. Induces cell death in hot pepper. The chain is NLP effector protein 3 from Phytophthora capsici.